Consider the following 122-residue polypeptide: Ribosome-binding factor A (122 aa).

The protein belongs to the RbfA family. As to quaternary structure, monomer. Binds 30S ribosomal subunits, but not 50S ribosomal subunits or 70S ribosomes.

Its subcellular location is the cytoplasm. One of several proteins that assist in the late maturation steps of the functional core of the 30S ribosomal subunit. Associates with free 30S ribosomal subunits (but not with 30S subunits that are part of 70S ribosomes or polysomes). Required for efficient processing of 16S rRNA. May interact with the 5'-terminal helix region of 16S rRNA. In Cupriavidus necator (strain ATCC 17699 / DSM 428 / KCTC 22496 / NCIMB 10442 / H16 / Stanier 337) (Ralstonia eutropha), this protein is Ribosome-binding factor A.